Consider the following 1069-residue polypeptide: RE1-silencing transcription factor (1069 aa).

The tract at residues Asp32–Gln121 is interaction with SIN3A. The interaction with SIN3B stretch occupies residues Ala43–Glu57. The tract at residues Ser85–Gly104 is disordered. Residues Pro144–Lys417 form an interaction with ZFP90 region. A C2H2-type 1 zinc finger spans residues Phe158–His180. The interval Ser200–Ser211 is required for binding to the neuron-restrictive silencer element. 7 consecutive C2H2-type zinc fingers follow at residues Ile215 to His237, Tyr247 to His269, Tyr275 to His297, Tyr303 to His325, Phe331 to His354, Leu360 to His382, and Phe388 to His411. Disordered regions lie at residues Lys425–Pro737 and Lys830–Gly1022. Basic and acidic residues predominate over residues Glu451–Pro482. The segment covering Ser484–Thr493 has biased composition (polar residues). 2 stretches are compositionally biased toward basic and acidic residues: residues Ser498–Asp511 and Glu554–Lys576. Basic residues predominate over residues Lys584–Ser600. Residues Ala630–Ser643 show a composition bias toward polar residues. Pro residues-rich tracts occupy residues Pro679–Met706 and Pro713–Met734. Composition is skewed to basic and acidic residues over residues Arg851–Glu860 and Gly876–Ala886. The span at Ser894–Ser904 shows a compositional bias: low complexity. The segment covering Thr930–Ala943 has biased composition (basic and acidic residues). Ser948 carries the post-translational modification Phosphoserine. Positions Glu957–Pro968 are enriched in low complexity. An interaction with RCOR1 region spans residues Glu981 to Tyr1059. Residues Phe1032 to His1054 form a C2H2-type 9 zinc finger.

In terms of assembly, isoform 1 and isoform 6 form heterodimers. Isoform 6: Forms homodimers and homooligomers; binds to the neuron-restrictive silencer element (NRSE) as monomer. Interacts with SIN3A, SIN3B and RCOR1. Interacts with CDYL. Interacts with EHMT1 and EHMT2 only in the presence of CDYL. Part of a complex containing at least CDYL, REST, WIZ, SETB1, EHMT1 and EHMT2. Interacts (via zinc-finger DNA-binding domain) with ZFP90 (via N- and C-termini); the interaction inhibits REST repressor activity. Interacts (via C2H2-type zinc finger 5) with PRICKLE1. Interacts with FBXW11 and BTRC. Interacts with USP7. In terms of processing, O-glycosylated. Phosphorylated; phosphorylation is required for ubiquitination. Post-translationally, ubiquitinated; ubiquitination is mediated by BTRC and leads to proteasomal degradation in G2 phase. Ubiquitination increases during neuronal differentiation. Deubiquitinated by USP7; leading to its stabilization and promoting the maintenance of neural progenitor cells. As to expression, expressed in the hippocampus including the granule cell layer of the dentate gyrus, the pyramidal cell layers of CA1 and CA3, the apical and basilar dendrite layers of the stratum radiatum and stratum oriens of CA1, the stratum lucidum and stratum oriens of CA3 and in astroglia (at protein level). Expressed in the brain, with the highest levels in the neurons of hippocampus, pons/medulla and midbrain.

It localises to the nucleus. The protein resides in the cytoplasm. Functionally, transcriptional repressor which binds neuron-restrictive silencer element (NRSE) and represses neuronal gene transcription in non-neuronal cells. Restricts the expression of neuronal genes by associating with two distinct corepressors, SIN3A and RCOR1, which in turn recruit histone deacetylase to the promoters of REST-regulated genes. Mediates repression by recruiting the BHC complex at RE1/NRSE sites which acts by deacetylating and demethylating specific sites on histones, thereby acting as a chromatin modifier. Transcriptional repression by REST-CDYL via the recruitment of histone methyltransferase EHMT2 may be important in transformation suppression. Represses the expression of SRRM4 in non-neural cells to prevent the activation of neural-specific splicing events and to prevent production of REST isoform 6. Repressor activity may be inhibited by forming heterodimers with isoform 6, thereby preventing binding to NRSE or binding to corepressors and leading to derepression of target genes. Also maintains repression of neuronal genes in neural stem cells, and allows transcription and differentiation into neurons by dissociation from RE1/NRSE sites of target genes. Thereby is involved in maintaining the quiescent state of adult hippocampal neural stem cells and preventing premature differentiation into mature neurons. Plays a role in the developmental switch in synaptic NMDA receptor composition during postnatal development, by repressing GRIN2B expression and thereby altering NMDA receptor properties from containing primarily GRIN2B to primarily GRIN2A subunits. Acts as a regulator of osteoblast differentiation. Key repressor of gene expression in hypoxia; represses genes in hypoxia by direct binding to an RE1/NRSE site on their promoter regions. May also function in stress resistance in the brain during aging; possibly by regulating expression of genes involved in cell death and in the stress response. Repressor of gene expression in the hippocampus after ischemia by directly binding to RE1/NRSE sites and recruiting SIN3A and RCOR1 to promoters of target genes, thereby promoting changes in chromatin modifications and ischemia-induced cell death. After ischemia, might play a role in repression of miR-132 expression in hippocampal neurons, thereby leading to neuronal cell death. In terms of biological role, binds to the 3' region of the neuron-restrictive silencer element (NRSE), with lower affinity than full-length REST isoform 1. Exhibits weaker repressor activity compared to isoform 1. May negatively regulate the repressor activity of isoform 1 by binding to isoform 1, thereby preventing its binding to NRSE and leading to derepression of target genes. However, in another study, does not appear to be implicated in repressor activity of a NRSE motif-containing reporter construct nor in inhibitory activity on the isoform 1 transcriptional repressor activity. Post-transcriptional inactivation of REST by SRRM4-dependent alternative splicing into isoform 6 is required in mechanosensory hair cells in the inner ear for derepression of neuronal genes and hearing. The protein is RE1-silencing transcription factor (Rest) of Rattus norvegicus (Rat).